The primary structure comprises 376 residues: Gibberellin 20 oxidase 4 (376 aa).

The region spanning 222–322 is the Fe2OG dioxygenase domain; it reads DNESIFRLNY…RKTLAFFLCP (101 aa). The Fe cation site is built by His247, Asp249, and His303. Arg313 is a catalytic residue.

Belongs to the iron/ascorbate-dependent oxidoreductase family. GA20OX subfamily. Fe(2+) serves as cofactor. The cofactor is L-ascorbate. Expressed in roots. Detected in leaves, inflorescences and siliques, but not in stems and dry seeds.

The catalysed reaction is gibberellin A12 + 2 2-oxoglutarate + 3 O2 + H(+) = gibberellin A9 + 2 succinate + 3 CO2 + 2 H2O. The enzyme catalyses gibberellin A53 + 2 2-oxoglutarate + 3 O2 + H(+) = gibberellin A20 + 2 succinate + 3 CO2 + 2 H2O. It participates in plant hormone biosynthesis; gibberellin biosynthesis. Its function is as follows. Key oxidase enzyme in the biosynthesis of gibberellin that catalyzes the conversion of GA12 and GA53 to GA9 and GA20 respectively, via a three-step oxidation at C-20 of the GA skeleton. The polypeptide is Gibberellin 20 oxidase 4 (GA20OX4) (Arabidopsis thaliana (Mouse-ear cress)).